The chain runs to 173 residues: Ribosome maturation factor RimM (173 aa).

A PRC barrel domain is found at 93 to 166 (EDEYLVSDMI…KMLVDTIEGM (74 aa)).

The protein belongs to the RimM family. In terms of assembly, binds ribosomal protein uS19.

The protein resides in the cytoplasm. Its function is as follows. An accessory protein needed during the final step in the assembly of 30S ribosomal subunit, possibly for assembly of the head region. Essential for efficient processing of 16S rRNA. May be needed both before and after RbfA during the maturation of 16S rRNA. It has affinity for free ribosomal 30S subunits but not for 70S ribosomes. The polypeptide is Ribosome maturation factor RimM (Fusobacterium nucleatum subsp. nucleatum (strain ATCC 25586 / DSM 15643 / BCRC 10681 / CIP 101130 / JCM 8532 / KCTC 2640 / LMG 13131 / VPI 4355)).